A 390-amino-acid chain; its full sequence is Putative cyclin-F2-1 (390 aa).

A disordered region spans residues 135 to 154; it reads YNGDDDAPAPDDSMASRPQL.

Belongs to the cyclin family. Cyclin F subfamily.

The chain is Putative cyclin-F2-1 (CycF2-1) from Oryza sativa subsp. japonica (Rice).